The primary structure comprises 464 residues: Argininosuccinate lyase (464 aa).

The protein belongs to the lyase 1 family. Argininosuccinate lyase subfamily.

It is found in the cytoplasm. It carries out the reaction 2-(N(omega)-L-arginino)succinate = fumarate + L-arginine. It participates in amino-acid biosynthesis; L-arginine biosynthesis; L-arginine from L-ornithine and carbamoyl phosphate: step 3/3. This is Argininosuccinate lyase from Pseudomonas aeruginosa (strain UCBPP-PA14).